Consider the following 346-residue polypeptide: ATP-dependent 6-phosphofructokinase (346 aa).

Residues Gly-13, 76–77, and 106–109 contribute to the ATP site; these read RL and GEGT. Glu-107 lines the Mg(2+) pocket. Substrate contacts are provided by residues 129-131, Arg-166, 173-175, Glu-226, Arg-270, and 276-279; these read TID, MGR, and HIQR. Catalysis depends on Asp-131, which acts as the Proton acceptor.

Belongs to the phosphofructokinase type A (PFKA) family. Mixed-substrate PFK group III subfamily. In terms of assembly, homodimer or homotetramer. It depends on Mg(2+) as a cofactor.

It localises to the cytoplasm. It catalyses the reaction beta-D-fructose 6-phosphate + ATP = beta-D-fructose 1,6-bisphosphate + ADP + H(+). It functions in the pathway carbohydrate degradation; glycolysis; D-glyceraldehyde 3-phosphate and glycerone phosphate from D-glucose: step 3/4. In terms of biological role, catalyzes the phosphorylation of D-fructose 6-phosphate to fructose 1,6-bisphosphate by ATP, the first committing step of glycolysis. The chain is ATP-dependent 6-phosphofructokinase from Corynebacterium efficiens (strain DSM 44549 / YS-314 / AJ 12310 / JCM 11189 / NBRC 100395).